A 390-amino-acid polypeptide reads, in one-letter code: Probable tRNA pseudouridine synthase D (390 aa).

The Nucleophile role is filled by Asp-93. The region spanning 166–353 (HVLNYFGIQR…YGTRRKLITP (188 aa)) is the TRUD domain.

The protein belongs to the pseudouridine synthase TruD family.

It catalyses the reaction uridine(13) in tRNA = pseudouridine(13) in tRNA. Its function is as follows. Could be responsible for synthesis of pseudouridine from uracil-13 in transfer RNAs. This is Probable tRNA pseudouridine synthase D from Methanococcus vannielii (strain ATCC 35089 / DSM 1224 / JCM 13029 / OCM 148 / SB).